A 701-amino-acid polypeptide reads, in one-letter code: DUF724 domain-containing protein 6 (701 aa).

Disordered regions lie at residues 299 to 353 (MKTK…KRAN) and 374 to 452 (VEPV…DESC). Basic and acidic residues predominate over residues 326 to 340 (LNLEKSAETLTKAES). Polar residues predominate over residues 381–399 (RVRTATPLKQTKADTQGKS). 3 stretches are compositionally biased toward basic and acidic residues: residues 403-412 (KTLEPMRDEN), 421-430 (KVLEEKNSEK), and 437-449 (RQEEHNSDLKETD). In terms of domain architecture, DUF724 spans 514–700 (LPFAKKSPFW…LEFQSTASAP (187 aa)). The stretch at 626–670 (LEKKIEAGEIEGHTYEEEMAELELKILELKRQQVVAKEMKEATDK) forms a coiled coil.

As to expression, expressed in roots, stems and flowers.

It localises to the nucleus. In terms of biological role, may be involved in the polar growth of plant cells via transportation of RNAs. This is DUF724 domain-containing protein 6 from Arabidopsis thaliana (Mouse-ear cress).